A 484-amino-acid chain; its full sequence is Putative sodium/proton-dependent alanine carrier protein YrbD (484 aa).

The next 11 helical transmembrane spans lie at 11–31 (VLWS…FSIM), 66–88 (ALSG…FGGP), 92–114 (FWMW…LAQI), 139–159 (WFAV…MPGV), 172–192 (FGIS…FIIF), 205–225 (IVPF…VMNV), 238–258 (SAFA…SWGV), 292–312 (AFSV…MILF), 350–370 (GFGA…TIMA), 390–410 (WAML…TVKT), and 416–436 (ALGD…IVLL).

The protein belongs to the alanine or glycine:cation symporter (AGCS) (TC 2.A.25) family.

Its subcellular location is the cell membrane. The chain is Putative sodium/proton-dependent alanine carrier protein YrbD (yrbD) from Bacillus subtilis (strain 168).